The following is a 707-amino-acid chain: Zinc finger protein 60 (707 aa).

The region spanning 14–86 (VTFRDVAVDF…VKKETGRPSQ (73 aa)) is the KRAB domain. 19 consecutive C2H2-type zinc fingers follow at residues 173–195 (YKCKDCGKCFGCKSNLHQHESIH), 201–223 (YECKDCGKTFRLPQMLSRHQKSH), 229–251 (FECNICGKSFHLPTLLQYHKNIH), 257–282 (FECEECGKSFKSFNRISTLFQHRTIH), 288–310 (YKCNVCGKAFNRRSNLLQHQKIH), 316–338 (FHCKVCGKAFTVLAQLTRHENIH), 344–366 (FECKQCGKIFSNGSYLLRHYDTH), 372–394 (FECNICGKAFRLHLYLSEHQKTH), 400–422 (FKCKLCESAFRRKYQLSEHQRIH), 428–450 (YQCKDCWEFFRRRSNFIEHQSIH), 456–478 (FECKDCGKVFRLNIHLIRHQRFH), 484–506 (FECKECGKAFHFSSQLNNHKTSH), 512–534 (FECKECGKSFKRVSSLVEHRIIH), 540–562 (YKCNACGRAFNRRSNLMQHEKIH), 568–590 (FECKDCGKAFTVLAQLTRHQTIH), 596–618 (YECEQCGSAFRLPYQLTQHQRIH), 624–646 (FQCKECGRAFVRSTGLRIHERIH), 652–674 (FQCKECGEAFQYHYQFLGHFRIH), and 680–702 (YECSECGKYFTYGRDLKVHQSIH).

The protein belongs to the krueppel C2H2-type zinc-finger protein family. In terms of tissue distribution, expressed widely and evenly in most adult mouse tissues.

The protein localises to the nucleus. In terms of biological role, may have a role during differentiation processes. In Mus musculus (Mouse), this protein is Zinc finger protein 60 (Zfp60).